We begin with the raw amino-acid sequence, 287 residues long: Phosphoribosylaminoimidazole-succinocarboxamide synthase (287 aa).

It belongs to the SAICAR synthetase family.

The enzyme catalyses 5-amino-1-(5-phospho-D-ribosyl)imidazole-4-carboxylate + L-aspartate + ATP = (2S)-2-[5-amino-1-(5-phospho-beta-D-ribosyl)imidazole-4-carboxamido]succinate + ADP + phosphate + 2 H(+). It functions in the pathway purine metabolism; IMP biosynthesis via de novo pathway; 5-amino-1-(5-phospho-D-ribosyl)imidazole-4-carboxamide from 5-amino-1-(5-phospho-D-ribosyl)imidazole-4-carboxylate: step 1/2. The sequence is that of Phosphoribosylaminoimidazole-succinocarboxamide synthase from Neisseria meningitidis serogroup C (strain 053442).